Consider the following 311-residue polypeptide: Ribosomal RNA small subunit methyltransferase H (311 aa).

Residues 32–34, aspartate 52, phenylalanine 79, aspartate 100, and glutamine 107 contribute to the S-adenosyl-L-methionine site; that span reads AGH.

Belongs to the methyltransferase superfamily. RsmH family.

The protein localises to the cytoplasm. The enzyme catalyses cytidine(1402) in 16S rRNA + S-adenosyl-L-methionine = N(4)-methylcytidine(1402) in 16S rRNA + S-adenosyl-L-homocysteine + H(+). In terms of biological role, specifically methylates the N4 position of cytidine in position 1402 (C1402) of 16S rRNA. The polypeptide is Ribosomal RNA small subunit methyltransferase H (Staphylococcus carnosus (strain TM300)).